The sequence spans 275 residues: Large ribosomal subunit protein uL2 (275 aa).

Disordered stretches follow at residues 28–54 (APHA…TRHI) and 223–275 (VAMN…RNKK).

Belongs to the universal ribosomal protein uL2 family. As to quaternary structure, part of the 50S ribosomal subunit. Forms a bridge to the 30S subunit in the 70S ribosome.

Functionally, one of the primary rRNA binding proteins. Required for association of the 30S and 50S subunits to form the 70S ribosome, for tRNA binding and peptide bond formation. It has been suggested to have peptidyltransferase activity; this is somewhat controversial. Makes several contacts with the 16S rRNA in the 70S ribosome. In Saccharophagus degradans (strain 2-40 / ATCC 43961 / DSM 17024), this protein is Large ribosomal subunit protein uL2.